Reading from the N-terminus, the 276-residue chain is Elongation factor Ts, mitochondrial (276 aa).

It belongs to the EF-Ts family.

Its subcellular location is the mitochondrion. Its function is as follows. Associates with the EF-Tu.GDP complex and induces the exchange of GDP to GTP. It remains bound to the aminoacyl-tRNA.EF-Tu.GTP complex up to the GTP hydrolysis stage on the ribosome. This chain is Elongation factor Ts, mitochondrial, found in Leishmania braziliensis.